The following is a 345-amino-acid chain: Trans-enoyl reductase tndF (345 aa).

The tract at residues 1–26 (MAREHQAAILPQPGGPLSVGMRPTPK) is disordered. NADP(+) is bound by residues 44 to 49 (CDYYQR), 168 to 171 (SSSV), 191 to 194 (SPEH), tyrosine 209, and 244 to 245 (LD).

The protein belongs to the zinc-containing alcohol dehydrogenase family.

It functions in the pathway secondary metabolite biosynthesis; terpenoid biosynthesis. Functionally, trans-enoyl reductase; part of the gene cluster that mediates the biosynthesis of talaronoid C, a fusicoccane diterpenoid with an unprecedented tricyclic 5/8/6 ring system. The first step in the pathway is performed by the fusicoccadiene synthase tndC that possesses both prenyl transferase and terpene cyclase activity, converting isopentenyl diphosphate and dimethylallyl diphosphate into geranylgeranyl diphosphate (GGDP) and further converting GGDP into talarodiene, a precursor for talaronoid C. The remaining enzymes from the cluster include the cytochrome P450 monooxygenase tndB, the aldehyde reductase tndE and the alcohol dehydrogenase tndF that are involved in the conversion of talarodiene into talaronoid C. This chain is Trans-enoyl reductase tndF, found in Aspergillus flavipes.